The following is a 705-amino-acid chain: MCPLPHANLSMVTNEVTNFMSSLIAFQTYHLRHSFLSPSNMIPRSSNHKRSLSSGPRSLSPDRTVTKTKSTNDLAATATEKPSLATRSNSAGDIPDSGFSTLRDPRLVNNSEASDTSSTPSHHPDLSSEVAALSVKLIQAINNQTTLDDNLVATRQELEQAQNRIKSLESENEKYRHDIEQAVLIKKADADREISQLKAALAEEKAQRAIVEKSKKTIEQELETLTAALFEEANKMVAAAKLEREAVEKKNEQLRAQVKDTELLLASHQEQLAELKSVMQGMNIAKDDVEVRTTISTVPSSPDGHQQLPGIFPRSLETADPPEQSPHVEEIVPGPSTSFPHLFKSVCRTDIQAFEDFRELFSLSSASKPPSRAASGSYAGLNVMSLANFSSAGFGSASSSPAKSTHSPNGSMSSPQPATSHIPLKETRFYKRVLMEDIEPTLRLDAAPGISWLTRRAVLSSICEGSLVVEPIPPATRKYGFPCSLCGDRRPGSANERTHRFRTSDSDTAQRYPLCVLCLEKVRSSCEFTGYLRLILDGHVRAADAEEEKDAWEETVRLRERMFWSRIGGGVVPTFAQANSFENAGSAPSRHNLGDRIGDDEQDRLDAPLETYETPNHGHDHGVSDSDYDNASVSGYTSASGVSRPFYGSPKSHASEKGKDEYLEHGVSQVTLSATSDDPKSITHVEESLVIRTAKNDDGHDDDQN.

Residues 144 to 285 (QTTLDDNLVA…KSVMQGMNIA (142 aa)) are a coiled coil.

Belongs to the SEC2 family.

Guanine nucleotide exchange factor that plays an important role in regulating the growth and virulence, probably by regulating the autophagy pathway. Affects the sensitivity to cell wall disruptors and the cell wall thickness by regulating the expression levels of the cell wall integrity (CWI) pathway genes, thus coordinating the growth and virulence. Positively regulates the autophagy pathway to enhance the expression of CWI pathway genes in the presence of autophagy inducers. This is Rab guanine nucleotide exchange factor sec2 from Aspergillus fumigatus (strain ATCC MYA-4609 / CBS 101355 / FGSC A1100 / Af293) (Neosartorya fumigata).